The sequence spans 339 residues: MPRRGPFLALFAGCVSRGASRSPPGHTLTRRPMDPVFLQIGNFTIAWYGVLMMLGIAAGYWLGLKLARERGLNADLFERMILWMLFWGFVGARLVFVLTSWHIFEGIPFPRVLLDIVNLRNGGISIHGGLIGGVLTLIYFARRYRLNFYQYADLAVPGVAFGIIGGRLGNIMNGTDTVGRVTGWPIGYHWPASARAFHEGMCRPNPNPDMDLSKYCHEVGGQIMMTAPVHFTQLYGVIIGIILAVASYFWLKSRVPGWAFWQFWLWYSILRAGWEETFRLNPLTIKTYLNQGLDAPGIGLWTDTQIFSVPLILVSLWMLWRLRQRRQVTVPTVPVQSQS.

The next 3 helical transmembrane spans lie at 43–63, 81–101, and 121–141; these read FTIAWYGVLMMLGIAAGYWLG, ILWMLFWGFVGARLVFVLTSW, and NGGISIHGGLIGGVLTLIYFA. Arginine 167 provides a ligand contact to a 1,2-diacyl-sn-glycero-3-phospho-(1'-sn-glycerol). 2 consecutive transmembrane segments (helical) span residues 231–251 and 300–320; these read FTQLYGVIIGIILAVASYFWL and LWTDTQIFSVPLILVSLWMLW.

The protein belongs to the Lgt family.

It is found in the cell membrane. It catalyses the reaction L-cysteinyl-[prolipoprotein] + a 1,2-diacyl-sn-glycero-3-phospho-(1'-sn-glycerol) = an S-1,2-diacyl-sn-glyceryl-L-cysteinyl-[prolipoprotein] + sn-glycerol 1-phosphate + H(+). It participates in protein modification; lipoprotein biosynthesis (diacylglyceryl transfer). Catalyzes the transfer of the diacylglyceryl group from phosphatidylglycerol to the sulfhydryl group of the N-terminal cysteine of a prolipoprotein, the first step in the formation of mature lipoproteins. This Deinococcus radiodurans (strain ATCC 13939 / DSM 20539 / JCM 16871 / CCUG 27074 / LMG 4051 / NBRC 15346 / NCIMB 9279 / VKM B-1422 / R1) protein is Phosphatidylglycerol--prolipoprotein diacylglyceryl transferase.